We begin with the raw amino-acid sequence, 64 residues long: Large ribosomal subunit protein bL33 (64 aa).

Composition is skewed to basic and acidic residues over residues 16 to 25 (EARTSSDPKR) and 33 to 42 (TTEKNRRNTT). The segment at 16 to 42 (EARTSSDPKRSNGVSRYTTEKNRRNTT) is disordered.

Belongs to the bacterial ribosomal protein bL33 family.

The protein is Large ribosomal subunit protein bL33 of Prochlorococcus marinus (strain MIT 9301).